The sequence spans 598 residues: Elongation factor 4 (598 aa).

One can recognise a tr-type G domain in the interval 4-181; the sequence is KKIRNFAIIA…AIVNLIPPPQ (178 aa). GTP contacts are provided by residues 16-21 and 128-131; these read DHGKST and NKID.

Belongs to the TRAFAC class translation factor GTPase superfamily. Classic translation factor GTPase family. LepA subfamily.

The protein resides in the cell membrane. The catalysed reaction is GTP + H2O = GDP + phosphate + H(+). Its function is as follows. Required for accurate and efficient protein synthesis under certain stress conditions. May act as a fidelity factor of the translation reaction, by catalyzing a one-codon backward translocation of tRNAs on improperly translocated ribosomes. Back-translocation proceeds from a post-translocation (POST) complex to a pre-translocation (PRE) complex, thus giving elongation factor G a second chance to translocate the tRNAs correctly. Binds to ribosomes in a GTP-dependent manner. The polypeptide is Elongation factor 4 (Mesomycoplasma hyopneumoniae (strain J / ATCC 25934 / NCTC 10110) (Mycoplasma hyopneumoniae)).